The sequence spans 117 residues: Gamma-aminobutyric acid receptor-associated protein-like 1 (117 aa).

Gly-116 is lipidated: Phosphatidylethanolamine amidated glycine; alternate. Gly-116 carries the Phosphatidylserine amidated glycine; alternate lipid modification. Lys-117 is a propeptide (removed in mature form).

The protein belongs to the ATG8 family. Interacts with ATG13, OPRK1, RB1CC1 and ULK1. Interacts with TP53INP1 and TP53INP2. Directly interacts with SQSTM1. Interacts with ATG3, ATG7 and MAP15. Interacts with TECPR2. Interacts with TBC1D5. Interacts with MAPK15. Interacts with TRIM5. Interacts with MEFV and TRIM21. Interacts with WDFY3. Interacts with the reticulophagy receptor TEX264. Interacts with UBA5. Interacts with KBTBD6 and KBTBD7; the interaction is direct. Interacts with reticulophagy regulators RETREG1, RETREG2 and RETREG3. Interacts with IRGM. Interacts with DNM2. Interacts with NCOA4 (via C-terminus). Post-translationally, the precursor molecule is cleaved by ATG4 (ATG4A, ATG4B, ATG4C or ATG4D) to expose the glycine at the C-terminus and form the cytosolic form, GABARAPL1-I. The processed form is then activated by APG7L/ATG7, transferred to ATG3 and conjugated to phosphatidylethanolamine (PE) phospholipid to form the membrane-bound form, GABARAPL1-II. During non-canonical autophagy, the processed form is conjugated to phosphatidylserine (PS) phospholipid. ATG4 proteins also mediate the delipidation of PE-conjugated forms required for GABARAPL1 recycling when autophagosomes fuse with lysosomes. In addition, ATG4B and ATG4D mediate delipidation of ATG8 proteins conjugated to PS during non-canonical autophagy. ATG4B constitutes the major protein for proteolytic activation. ATG4D is the main enzyme for delipidation activity.

The protein resides in the cytoplasmic vesicle. The protein localises to the autophagosome. Its subcellular location is the cytoplasmic vesicle membrane. It localises to the cytoplasm. It is found in the cytoskeleton. The protein resides in the endoplasmic reticulum. The protein localises to the golgi apparatus. Functionally, ubiquitin-like modifier that increases cell-surface expression of kappa-type opioid receptor through facilitating anterograde intracellular trafficking of the receptor. Involved in formation of autophagosomal vacuoles. While LC3s are involved in elongation of the phagophore membrane, the GABARAP/GATE-16 subfamily is essential for a later stage in autophagosome maturation. Through its interaction with the reticulophagy receptor TEX264, participates in the remodeling of subdomains of the endoplasmic reticulum into autophagosomes upon nutrient stress, which then fuse with lysosomes for endoplasmic reticulum turnover. This is Gamma-aminobutyric acid receptor-associated protein-like 1 from Pongo abelii (Sumatran orangutan).